The following is a 249-amino-acid chain: Inhibitor of growth protein 4 (249 aa).

Positions 25–118 form a coiled coil; sequence FQLMRDLDQR…ADLKEKQIES (94 aa). N6-acetyllysine is present on residues Lys112, Lys127, and Lys129. The disordered stretch occupies residues 115 to 163; that stretch reads QIESSDYDSSSSKGKKKGRTQKEKKAARARSKGKNSDEEAPKAAQKKLK. The Bipartite nuclear localization signal signature appears at 127 to 148; it reads KGKKKGRTQKEKKAARARSKGK. Arg133 is subject to Citrulline. N6-acetyllysine occurs at positions 146, 148, and 156. At Arg166 the chain carries Citrulline. The PHD-type zinc-finger motif lies at 196–245; it reads PTYCLCHQVSYGEMIGCDNPDCSIEWFHFACVGLTTKPRGKWFCPRCSQE. Zn(2+) contacts are provided by Cys199, Cys201, Cys212, Cys217, His223, Cys226, Cys239, and Cys242.

The protein belongs to the ING family. Homodimer. Component of the HBO1 complex composed of KAT7/HBO1, MEAF6, ING4 or ING5, and one scaffold subunit: complexes containing BRPF scaffold (BRPF1, BRD1/BRPF2 or BRPF3) direct KAT7/HBO1 specificity towards H3K14ac, while complexes containing JADE scaffold (JADE1, JADE2 and JADE3) mediate acetylation of histone H4. Interacts with H3K4me3 and to a lesser extent with H3K4me2, the interaction augments KAT7/HBO1 acetylation activity on H3 tails. Interacts with EP300, RELA and TP53; these interactions may be indirect. Interacts with EGLN1. As to quaternary structure, interacts with BCL2A1. Post-translationally, citrullination by PADI4 within the nuclear localization signal disrupts the interaction with p53 and increases susceptibility to degradation. As to expression, isoform 2, isoform 3, isoform 4 and isoform 5 are expressed in the mammary gland, ovary, spleen and muscle. In terms of tissue distribution, expressed in the mammary gland, ovary, spleen and muscle.

It is found in the nucleus. Its function is as follows. Component of HBO1 complexes, which specifically mediate acetylation of histone H3 at 'Lys-14' (H3K14ac), and have reduced activity toward histone H4. Through chromatin acetylation it may function in DNA replication. May inhibit tumor progression by modulating the transcriptional output of signaling pathways which regulate cell proliferation. Can suppress brain tumor angiogenesis through transcriptional repression of RELA/NFKB3 target genes when complexed with RELA. May also specifically suppress loss of contact inhibition elicited by activated oncogenes such as MYC. Represses hypoxia inducible factor's (HIF) activity by interacting with HIF prolyl hydroxylase 2 (EGLN1). Can enhance apoptosis induced by serum starvation in mammary epithelial cell line HC11. In Mus musculus (Mouse), this protein is Inhibitor of growth protein 4 (Ing4).